We begin with the raw amino-acid sequence, 1037 residues long: Cysteine-rich motor neuron 1 protein (1037 aa).

An N-terminal signal peptide occupies residues 1–34 (MYLVAGGRGLAGCGHLSVSLLGLLLLLARSGTRA). The IGFBP N-terminal domain maps to 35 to 112 (LVCLPCDESK…EYEVGVCEDE (78 aa)). The Extracellular segment spans residues 35-940 (LVCLPCDESK…HPGEDSSLDS (906 aa)). 6 disulfide bridges follow: cysteine 37–cysteine 60, cysteine 40–cysteine 62, cysteine 45–cysteine 63, cysteine 51–cysteine 66, cysteine 74–cysteine 90, and cysteine 84–cysteine 109. Positions 314 to 316 (RGD) match the Cell attachment site motif. Residue asparagine 330 is glycosylated (N-linked (GlcNAc...) asparagine). VWFC domains follow at residues 334–391 (PACV…PVCE) and 401–457 (AGCY…PVCE). Antistasin-like domains follow at residues 469-498 (CGEL…TCQC), 505-532 (CLGL…LCQC), 539-564 (CRPT…ICRC), and 567-592 (CPEL…ICKC). 4 VWFC domains span residues 606–663 (GTCL…PSCT), 677–735 (SICH…PQCT), 751–809 (SYCR…PYCL), and 817–874 (VVCH…PMCP). A helical transmembrane segment spans residues 941–961 (IVSVVVPIIICLSIIIAFLLI). The Cytoplasmic portion of the chain corresponds to 962-1037 (NQKKQWVPLL…LQADNFYQTV (76 aa)). Threonine 1036 carries the phosphothreonine modification.

Interacts with BMP4 and BMP7. In terms of tissue distribution, expressed during embryonic development in brain, kidney, spinal cord, testis, lens, vibrissae, pinna, tooth primordia and in specific regions of the CNS. Expressed in adult lens. Displays male-specific expression in the fetal gonads with the strongest expression in the Sertoli cells of developing testis.

It localises to the membrane. In terms of biological role, may play a role in CNS development by interacting with growth factors implicated in motor neuron differentiation and survival. May play a role in capillary formation and maintenance during angiogenesis. Modulates BMP activity by affecting its processing and delivery to the cell surface. This Mus musculus (Mouse) protein is Cysteine-rich motor neuron 1 protein (Crim1).